Here is a 118-residue protein sequence, read N- to C-terminus: uncharacterized protein (118 aa).

The interval methionine 1–serine 49 is disordered. The span at lysine 11–serine 25 shows a compositional bias: basic residues. The segment covering lysine 26 to leucine 43 has biased composition (basic and acidic residues).

This is an uncharacterized protein from Schizosaccharomyces pombe (strain 972 / ATCC 24843) (Fission yeast).